Reading from the N-terminus, the 423-residue chain is Histidine--tRNA ligase (423 aa).

Belongs to the class-II aminoacyl-tRNA synthetase family. In terms of assembly, homodimer.

The protein resides in the cytoplasm. It carries out the reaction tRNA(His) + L-histidine + ATP = L-histidyl-tRNA(His) + AMP + diphosphate + H(+). The sequence is that of Histidine--tRNA ligase from Prochlorococcus marinus (strain MIT 9211).